Here is a 345-residue protein sequence, read N- to C-terminus: Microtubule-associated protein Jupiter (345 aa).

Positions 1-14 (MISNFDCTDNQASS) are enriched in polar residues. A disordered region spans residues 1 to 34 (MISNFDCTDNQASSKVLRPPGGGSSDIFGSEMPQ). At Ser24 the chain carries Phosphoserine. Thr35 is subject to Phosphothreonine. The span at 78–87 (QKTVDSHNRL) shows a compositional bias: basic and acidic residues. The interval 78–100 (QKTVDSHNRLFGEPTRPITPGKN) is disordered. Thr92 and Thr96 each carry phosphothreonine. 3 positions are modified to phosphoserine: Ser105, Ser134, and Ser145. Disordered regions lie at residues 127–241 (HYNG…QPHS) and 300–345 (EGNP…SGLW). Positions 132 to 145 (SGSVSSASSSVSSS) are enriched in low complexity. Polar residues predominate over residues 146-164 (TENLKMNSGSRSVFRNMST). Pro residues predominate over residues 177–191 (LCPPSPVRIEPPTPP). Composition is skewed to polar residues over residues 212–226 (DNSTYTKSDQVNEAC) and 315–326 (DYNQRQESSNAG).

The protein belongs to the MAP Jupiter family.

It localises to the nucleus. The protein resides in the cytoplasm. Its subcellular location is the cytoskeleton. It is found in the spindle. Its function is as follows. Binds to all microtubule populations. This Drosophila erecta (Fruit fly) protein is Microtubule-associated protein Jupiter.